A 354-amino-acid polypeptide reads, in one-letter code: Ornithine transcarbamylase, mitochondrial (354 aa).

The transit peptide at 1 to 32 (MLSNLRILLNNAALRKGHTSVVRHFWCGKPVQ) directs the protein to the mitochondrion. Lys-70 is subject to N6-acetyllysine; alternate. Lys-70 is modified (N6-succinyllysine; alternate). An N6-succinyllysine modification is found at Lys-80. Lys-88 is subject to N6-acetyllysine; alternate. Residue Lys-88 is modified to N6-succinyllysine; alternate. Residue 90–94 (STRTR) participates in carbamoyl phosphate binding. Phosphoserine is present on Ser-133. Residue Arg-141 coordinates carbamoyl phosphate. Position 141 (Arg-141) interacts with L-ornithine. Lys-144 is subject to N6-acetyllysine; alternate. Lys-144 is modified (N6-succinyllysine; alternate). Position 168 (His-168) interacts with carbamoyl phosphate. Residue Asn-199 coordinates L-ornithine. 3 positions are modified to N6-acetyllysine; alternate: Lys-221, Lys-231, and Lys-238. Residues Lys-221, Lys-231, and Lys-238 each carry the N6-succinyllysine; alternate modification. Lys-243 is modified (N6-acetyllysine). An L-ornithine-binding site is contributed by 263 to 267 (DTWIS). N6-succinyllysine is present on residues Lys-274 and Lys-289. Lys-292 is modified (N6-acetyllysine; alternate). Position 292 is an N6-succinyllysine; alternate (Lys-292). 302 to 305 (HCLP) lines the L-ornithine pocket. Residue Cys-303 is part of the active site. An N6-acetyllysine; alternate modification is found at Lys-307. Position 307 is an N6-succinyllysine; alternate (Lys-307). Arg-330 lines the carbamoyl phosphate pocket. Residue Arg-330 coordinates L-ornithine.

It belongs to the aspartate/ornithine carbamoyltransferase superfamily. OTCase family. In terms of assembly, homotrimer. Acetylation at Lys-88 negatively regulates ornithine carbamoyltransferase activity in response to nutrient signals.

The protein localises to the mitochondrion matrix. It catalyses the reaction carbamoyl phosphate + L-ornithine = L-citrulline + phosphate + H(+). Its pathway is nitrogen metabolism; urea cycle; L-citrulline from L-ornithine and carbamoyl phosphate: step 1/1. With respect to regulation, negatively regulated by lysine acetylation. Its function is as follows. Catalyzes the second step of the urea cycle, the condensation of carbamoyl phosphate with L-ornithine to form L-citrulline. The urea cycle ensures the detoxification of ammonia by converting it to urea for excretion. This Mus musculus (Mouse) protein is Ornithine transcarbamylase, mitochondrial.